The following is a 426-amino-acid chain: uncharacterized protein (426 aa).

This is an uncharacterized protein from Corynebacterium glutamicum (strain ATCC 13032 / DSM 20300 / JCM 1318 / BCRC 11384 / CCUG 27702 / LMG 3730 / NBRC 12168 / NCIMB 10025 / NRRL B-2784 / 534).